The sequence spans 307 residues: Non-homologous end joining protein Ku (307 aa).

The Ku domain maps to 11 to 179; it reads LSFGLVSIPV…EVRSMKDLNI (169 aa). 2 stretches are compositionally biased toward low complexity: residues 257–267 and 290–307; these read RGGAKAKPAAA and ARAP…RARK. The segment at 257 to 307 is disordered; it reads RGGAKAKPAAAPRRKAPEPVAGMAEATRARKPAARAPKSPAEAPAKVRARK.

The protein belongs to the prokaryotic Ku family. As to quaternary structure, homodimer. Interacts with LigD.

With LigD forms a non-homologous end joining (NHEJ) DNA repair enzyme, which repairs dsDNA breaks with reduced fidelity. Binds linear dsDNA with 5'- and 3'- overhangs but not closed circular dsDNA nor ssDNA. Recruits and stimulates the ligase activity of LigD. This is Non-homologous end joining protein Ku from Paraburkholderia phymatum (strain DSM 17167 / CIP 108236 / LMG 21445 / STM815) (Burkholderia phymatum).